The primary structure comprises 162 residues: Lipoprotein signal peptidase (162 aa).

4 helical membrane-spanning segments follow: residues 9 to 29, 39 to 59, 66 to 86, and 95 to 115; these read LCLV…LVAT, VIHG…FGLF, VRKF…LWLY, and VLSF…IDRF. Catalysis depends on residues aspartate 122 and aspartate 140. The chain crosses the membrane as a helical span at residues 136–156; sequence FNVADSAITIGMVVFVYHVIF.

Belongs to the peptidase A8 family.

It localises to the cell inner membrane. The enzyme catalyses Release of signal peptides from bacterial membrane prolipoproteins. Hydrolyzes -Xaa-Yaa-Zaa-|-(S,diacylglyceryl)Cys-, in which Xaa is hydrophobic (preferably Leu), and Yaa (Ala or Ser) and Zaa (Gly or Ala) have small, neutral side chains.. It participates in protein modification; lipoprotein biosynthesis (signal peptide cleavage). Functionally, this protein specifically catalyzes the removal of signal peptides from prolipoproteins. This Desulforapulum autotrophicum (strain ATCC 43914 / DSM 3382 / VKM B-1955 / HRM2) (Desulfobacterium autotrophicum) protein is Lipoprotein signal peptidase.